The following is a 409-amino-acid chain: Sulfide-quinone reductase (409 aa).

FAD contacts are provided by residues 8 to 12 (GGRFG), 34 to 35 (NK), and Cys129. Residue Cys178 is the Cysteine persulfide intermediate of the active site. 3 residues coordinate FAD: Asn271, Asp307, and Gly317. The active-site Cysteine persulfide intermediate is Cys350.

This sequence belongs to the SQRD family. In terms of assembly, monomer. FAD serves as cofactor.

It localises to the membrane. It carries out the reaction n a quinone + n hydrogen sulfide + n H(+) = polysulfur(n-2) + n a quinol. Inhibited by the quinone analog 2-heptyl-4-hydroxyquinolone N-oxide (HQNO). Inactivated by iodoacetamide treatment. Inhibited by KCN. In terms of biological role, catalyzes the oxidation of sulfides, such as hydrogen sulfide, with the help of a quinone. Has the highest activity with caldariella quinone and decylubiquinone, and lower activity with naphtoquinones. Consecutive reaction cycles lead to the accumulation of a polysulfide product on the active site Cys residues; these products are released when they exceed a critical length, typically as cyclooctasulfur. This is Sulfide-quinone reductase from Acidianus ambivalens (Desulfurolobus ambivalens).